The following is a 1126-amino-acid chain: Probable serine/threonine-protein kinase DDB_G0280111 (1126 aa).

In terms of domain architecture, Protein kinase spans 16–295; that stretch reads LNFVKQIAEG…NLLRNQQPLF (280 aa). Residues 22 to 30 and lysine 45 each bind ATP; that span reads IAEGGFSYV. The active-site Proton acceptor is aspartate 147. Over residues 314 to 333 the composition is skewed to low complexity; it reads NNNNNINNNNNNNIVNGKNI. Disordered regions lie at residues 314–469, 760–901, 944–1072, and 1095–1126; these read NNNN…NGNN, LNLN…QQQQ, TPSS…DEVR, and NKQS…GLLN. The span at 347–364 shows a compositional bias: pro residues; it reads TPTPPPPAPSQSPSPSPS. Residues 367–390 are compositionally biased toward polar residues; sequence VVNNIENNSNGLEHSNSNGNISQP. Composition is skewed to low complexity over residues 413-422, 432-469, and 760-795; these read PPNNSNNSFD, NLSN…NGNN, and LNLN…LNSS. 2 stretches are compositionally biased toward polar residues: residues 796–825 and 833–845; these read FDNI…SESG and EPTS…YQQS. The span at 846–856 shows a compositional bias: low complexity; sequence NNNNNNNNNNN. Residues 857–866 are compositionally biased toward polar residues; the sequence is GTPISLTPGS. Low complexity-rich tracts occupy residues 886 to 901, 953 to 971, and 1003 to 1035; these read QQQQ…QQQQ, PSTG…QQSQ, and NVNI…NPNL. Polar residues predominate over residues 1095 to 1105; that stretch reads NKQSRMNNPNN. Residues 1108-1126 show a composition bias toward acidic residues; the sequence is DEGDSGFGDGEEEDEGLLN.

It belongs to the protein kinase superfamily. Ser/Thr protein kinase family.

It carries out the reaction L-seryl-[protein] + ATP = O-phospho-L-seryl-[protein] + ADP + H(+). The enzyme catalyses L-threonyl-[protein] + ATP = O-phospho-L-threonyl-[protein] + ADP + H(+). The sequence is that of Probable serine/threonine-protein kinase DDB_G0280111 from Dictyostelium discoideum (Social amoeba).